Here is a 1115-residue protein sequence, read N- to C-terminus: Disheveled-associated activator of morphogenesis 2 (1115 aa).

The GBD/FH3 domain maps to 40 to 416 (GPIPNPEELN…QIVLQDERGV (377 aa)). The stretch at 434–515 (MLINENEVKQ…ELVARHNESS (82 aa)) forms a coiled coil. Disordered regions lie at residues 510–605 (RHNE…SHPL) and 655–697 (QEGP…SATG). Residues 518 to 694 (PVSSPPPPGG…TEKASRSMVS (177 aa)) enclose the FH1 domain. A compositionally biased stretch (pro residues) spans 540-583 (LPPPPPPLPFDSCPPPPAPPLPPGGPPIPPGAPPCFSSGPPPSH). The 448-residue stretch at 595-1042 (KKRIPQPSHP…DERRARMEFM (448 aa)) folds into the FH2 domain. The DAD domain maps to 1065 to 1095 (EESGEFDDLVSALRSGEVFDKDLSKFKRNRK).

The protein belongs to the formin homology family. As to quaternary structure, interacts with DVL3. Interacts with INF2. As to expression, in early embryogenesis, expression is confined to embryonic ectoderm. Highly dynamic expression in later stages of gastrulation. In early somite stages, detected in posterior node and persists until 9-10 somites have developed when expression is concentrated in the chordoneural hinge. During organogenesis, expressed in the CNS, PNS, liver primordia, limb buds and genital tubercle.

In terms of biological role, key regulator of the Wnt signaling pathway, which is required for various processes during development, such as dorsal patterning, determination of left/right symmetry or myelination in the central nervous system. Acts downstream of Wnt ligands and upstream of beta-catenin (CTNNB1). Required for canonical Wnt signaling pathway during patterning in the dorsal spinal cord by promoting the aggregation of Disheveled (Dvl) complexes, thereby clustering and formation of Wnt receptor signalosomes and potentiating Wnt activity. During dorsal patterning of the spinal cord, inhibits oligodendrocytes differentiation via interaction with PIP5K1A. Also regulates non-canonical Wnt signaling pathway. Acts downstream of PITX2 in the developing gut and is required for left/right asymmetry within dorsal mesentery: affects mesenchymal condensation by lengthening cadherin-based junctions through WNT5A and non-canonical Wnt signaling, inducing polarized condensation in the left dorsal mesentery necessary to initiate gut rotation. Together with DAAM1, required for myocardial maturation and sarcomere assembly. Is a regulator of actin nucleation and elongation, filopodia formation and podocyte migration. The protein is Disheveled-associated activator of morphogenesis 2 of Mus musculus (Mouse).